A 948-amino-acid polypeptide reads, in one-letter code: Putative helicase 009L (948 aa).

A Helicase ATP-binding domain is found at 64 to 243 (LSEDTPYREL…ADVLNLILPQ (180 aa)). Residue 77–84 (HAPGTGKT) participates in ATP binding. The DEAH box signature appears at 187–190 (DEVH). One can recognise a Helicase C-terminal domain in the interval 371–554 (VKYDYLVRVA…AVERILMTSA (184 aa)).

The sequence is that of Putative helicase 009L from Frog virus 3 (isolate Goorha) (FV-3).